Here is a 1940-residue protein sequence, read N- to C-terminus: Myosin-13 (1940 aa).

The Myosin N-terminal SH3-like domain maps to Asp-33–Pro-82. The Myosin motor domain maps to Asp-86–Asp-782. Position 130 is an N6,N6,N6-trimethyllysine (Lys-130). Residue Gly-179–Thr-186 coordinates ATP. Actin-binding stretches follow at residues Leu-659–Glu-681 and Arg-761–Gly-775. An IQ domain is found at Leu-785–Ser-814. A coiled-coil region spans residues Leu-843 to Glu-1940. The tract at residues Arg-1886 to Glu-1940 is disordered. Over residues Lys-1929–Glu-1940 the composition is skewed to basic and acidic residues.

Belongs to the TRAFAC class myosin-kinesin ATPase superfamily. Myosin family. As to quaternary structure, muscle myosin is a hexameric protein that consists of 2 heavy chain subunits (MHC), 2 alkali light chain subunits (MLC) and 2 regulatory light chain subunits (MLC-2).

The protein resides in the cytoplasm. It localises to the myofibril. Its function is as follows. Fast twitching myosin mediating the high-velocity and low-tension contractions of specific striated muscles. In Canis lupus familiaris (Dog), this protein is Myosin-13 (MYH13).